Here is a 1040-residue protein sequence, read N- to C-terminus: Multidrug resistance protein MdtB (1040 aa).

The next 12 helical transmembrane spans lie at 16-36, 347-367, 369-389, 396-416, 440-460, 472-492, 537-557, 863-883, 888-908, 911-931, 968-988, and 998-1018; these read FILR…AGII, LMLA…NIPA, IIPA…MVFL, LTLM…IVVI, IGFT…PLLF, FAVT…TLTP, WLTL…WIFI, LGST…VLGV, FIHP…ALLA, IAGA…IGIV, ILMT…STGV, and IGMV…TPVI.

The protein belongs to the resistance-nodulation-cell division (RND) (TC 2.A.6) family. MdtB subfamily. In terms of assembly, part of a tripartite efflux system composed of MdtA, MdtB and MdtC. MdtB forms a heteromultimer with MdtC.

The protein localises to the cell inner membrane. The chain is Multidrug resistance protein MdtB from Cronobacter sakazakii (strain ATCC BAA-894) (Enterobacter sakazakii).